The chain runs to 732 residues: uncharacterized protein (732 aa).

The disordered stretch occupies residues 145-207 (ETLRDSVINP…RRRPEMASPH (63 aa)). A compositionally biased stretch (basic and acidic residues) spans 170–179 (KGHETLERGS). Residues 176–524 (ERGSKALGPE…KKIPFLGYLI (349 aa)) form the Reverse transcriptase domain.

It localises to the mitochondrion. This is an uncharacterized protein from Marchantia polymorpha (Common liverwort).